A 234-amino-acid chain; its full sequence is Endonuclease V (234 aa).

Residues aspartate 42 and aspartate 108 each contribute to the Mg(2+) site.

This sequence belongs to the endonuclease V family. Mg(2+) is required as a cofactor.

Its subcellular location is the cytoplasm. The enzyme catalyses Endonucleolytic cleavage at apurinic or apyrimidinic sites to products with a 5'-phosphate.. Its function is as follows. DNA repair enzyme involved in the repair of deaminated bases. Selectively cleaves double-stranded DNA at the second phosphodiester bond 3' to a deoxyinosine leaving behind the intact lesion on the nicked DNA. This chain is Endonuclease V, found in Geotalea uraniireducens (strain Rf4) (Geobacter uraniireducens).